Here is a 363-residue protein sequence, read N- to C-terminus: tRNA N6-adenosine threonylcarbamoyltransferase (363 aa).

Fe cation-binding residues include His-121 and His-125. Substrate-binding positions include 143–147, Asp-176, Gly-189, and Asn-287; that span reads LASGG. Residue Asp-315 participates in Fe cation binding.

Belongs to the KAE1 / TsaD family. The cofactor is Fe(2+).

Its subcellular location is the cytoplasm. The enzyme catalyses L-threonylcarbamoyladenylate + adenosine(37) in tRNA = N(6)-L-threonylcarbamoyladenosine(37) in tRNA + AMP + H(+). In terms of biological role, required for the formation of a threonylcarbamoyl group on adenosine at position 37 (t(6)A37) in tRNAs that read codons beginning with adenine. Is involved in the transfer of the threonylcarbamoyl moiety of threonylcarbamoyl-AMP (TC-AMP) to the N6 group of A37, together with TsaE and TsaB. TsaD likely plays a direct catalytic role in this reaction. In Rhodopseudomonas palustris (strain BisB5), this protein is tRNA N6-adenosine threonylcarbamoyltransferase.